A 416-amino-acid chain; its full sequence is Cell division protein FtsZ (416 aa).

GTP contacts are provided by residues 20–24, 107–109, Glu-138, Arg-142, and Asp-186; these read GGGVN and GTG. A compositionally biased stretch (polar residues) spans 319–335; that stretch reads QETNANNSSPAQRQAES. The segment at 319–416 is disordered; it reads QETNANNSSP…DSLDFPDFLK (98 aa). The span at 376–392 shows a compositional bias: acidic residues; that stretch reads QDDDIPDDAGFDVDLPA. Residues 404 to 416 show a composition bias toward basic and acidic residues; sequence ARKDSLDFPDFLK.

Belongs to the FtsZ family. As to quaternary structure, homodimer. Polymerizes to form a dynamic ring structure in a strictly GTP-dependent manner. Interacts directly with several other division proteins.

Its subcellular location is the cytoplasm. Essential cell division protein that forms a contractile ring structure (Z ring) at the future cell division site. The regulation of the ring assembly controls the timing and the location of cell division. One of the functions of the FtsZ ring is to recruit other cell division proteins to the septum to produce a new cell wall between the dividing cells. Binds GTP and shows GTPase activity. The sequence is that of Cell division protein FtsZ from Kocuria rhizophila (strain ATCC 9341 / DSM 348 / NBRC 103217 / DC2201).